The following is a 147-amino-acid chain: Hemoglobin subunit gamma-2 (147 aa).

One can recognise a Globin domain in the interval 3–147 (HFTEEDKATI…VASALSSRYH (145 aa)). Thr-13 is subject to Phosphothreonine. Phosphoserine occurs at positions 45, 51, and 53. Residue Lys-60 is modified to N6-acetyllysine. Residue His-64 participates in heme b binding. An N6-acetyllysine modification is found at Lys-83. His-93 serves as a coordination point for heme b. Cys-94 is subject to S-nitrosocysteine. Phosphoserine occurs at positions 140, 143, and 144.

It belongs to the globin family. Heterotetramer of two alpha chains and two gamma chains in fetal hemoglobin (Hb F). As to expression, red blood cells.

Functionally, gamma chains make up the fetal hemoglobin F, in combination with alpha chains. The protein is Hemoglobin subunit gamma-2 (HBG2) of Gorilla gorilla gorilla (Western lowland gorilla).